Reading from the N-terminus, the 1430-residue chain is Bromodomain-containing protein homolog (1430 aa).

A C2H2-type zinc finger spans residues 23-49; sequence FACPVRGCDRSYKTIMGLQYHLMKYDH. A disordered region spans residues 51-111; it reads NPQPLTPVLT…AGGGSASGVS (61 aa). The segment covering 62 to 81 has biased composition (basic residues); that stretch reads SRKKARSRSGGHHSTPRPHK. A PHD-type 1 zinc finger spans residues 283 to 333; the sequence is DAVCCICLDGECQNTNVILFCDMCNLAVHQDCYGVPYIPEGQWLCRRCLQS. Positions 286, 289, 303, 306, 311, 314, 327, and 330 each coordinate Zn(2+). Residues 337 to 370 form a C2HC pre-PHD-type zinc finger; the sequence is PVNCVLCPNAGGAFKQTDHGQWAHVVCALWIPEV. A PHD-type 2 zinc finger spans residues 394–457; that stretch reads LTCYVCKEKG…QKFAYCHAHT (64 aa). The Bromo domain maps to 611-715; it reads LQLNPLEAAL…DQAAPLFVQV (105 aa). The span at 796-805 shows a compositional bias: basic residues; it reads KARFAARHSS. Disordered regions lie at residues 796–887, 901–942, 1012–1054, and 1076–1301; these read KARF…SSPV, AQAA…TTAA, ANLP…QALP, and QRDV…GQKP. Acidic residues predominate over residues 842–857; the sequence is HDDDDEEEDSDEDSMG. A compositionally biased stretch (polar residues) spans 865–887; sequence LLNSTQTPPCSPIKSLNNSSSPV. Composition is skewed to low complexity over residues 922–942, 1034–1043, and 1085–1107; these read NSQS…TTAA, SSSMSPKKSP, and APSQ…SCSD. The span at 1108 to 1120 shows a compositional bias: acidic residues; it reads FDSDEASEGDADG. Basic and acidic residues predominate over residues 1121-1137; that stretch reads DPDRDGGRSRSEERDST. Composition is skewed to polar residues over residues 1151-1165 and 1265-1278; these read ASLN…NMAI and NTTA…TNNN. Residues 1281 to 1293 are compositionally biased toward basic and acidic residues; the sequence is KHSEDSASSERHN. In terms of domain architecture, PWWP spans 1305–1378; it reads PLQLVWAKCR…TWQWLPANKL (74 aa).

Component of the Enok complex composed of at least Br140, enok, Eaf6 and Ing5. As part of the Enok complex, interacts with elg1 and the Elg1 RFC-like complex.

The protein localises to the nucleus. Scaffold subunit of the histone acetyltransferase (HAT) Enok complex which has histone H3 acetyltransferase activity. As part of the Enok complex, associates with the Elg1 RFC-like complex and down-regulates its PCNA-unloading function to promote the G1/S transition. May also play a role in maintaining the protein levels and stability of enok. This chain is Bromodomain-containing protein homolog, found in Drosophila melanogaster (Fruit fly).